A 498-amino-acid chain; its full sequence is TORTIFOLIA1-like protein 5 (498 aa).

HEAT repeat units follow at residues Glu56–Asp93, Pro97–Gly134, Pro136–Glu173, Glu177–Gly214, and Lys219–Glu257. The disordered stretch occupies residues Glu296 to Glu423. Residues Thr300 to Lys322 are compositionally biased toward low complexity. Over residues Asn343–Glu366 the composition is skewed to basic and acidic residues. Polar residues predominate over residues Asn390 to Ser400. Position 426 is a phosphoserine (Ser426).

This Arabidopsis thaliana (Mouse-ear cress) protein is TORTIFOLIA1-like protein 5.